Reading from the N-terminus, the 100-residue chain is Urease subunit gamma (100 aa).

The protein belongs to the urease gamma subunit family. In terms of assembly, heterotrimer of UreA (gamma), UreB (beta) and UreC (alpha) subunits. Three heterotrimers associate to form the active enzyme.

It is found in the cytoplasm. It catalyses the reaction urea + 2 H2O + H(+) = hydrogencarbonate + 2 NH4(+). The protein operates within nitrogen metabolism; urea degradation; CO(2) and NH(3) from urea (urease route): step 1/1. In Herpetosiphon aurantiacus (strain ATCC 23779 / DSM 785 / 114-95), this protein is Urease subunit gamma.